Consider the following 386-residue polypeptide: D(1)-like dopamine receptor (386 aa).

Residues 1 to 10 (MEIFTTTRGT) are compositionally biased toward polar residues. A disordered region spans residues 1-28 (MEIFTTTRGTSAGPEPAPGGHGGTDSPR). At 1 to 35 (MEIFTTTRGTSAGPEPAPGGHGGTDSPRTSDLSLR) the chain is on the extracellular side. The chain crosses the membrane as a helical span at residues 36-56 (ALTGCVLCILIVSTLLGNALV). At 57 to 72 (CAAVIKFRHLRSKVTN) the chain is on the cytoplasmic side. Residues 73–92 (AFVISLAVSDLFVAVLVMPW) traverse the membrane as a helical segment. Residues 93-109 (RAVSEVAGVWLFGAFCD) lie on the Extracellular side of the membrane. Cys108 and Cys188 are joined by a disulfide. The chain crosses the membrane as a helical span at residues 110 to 131 (TWVAFDIMCSTASILHLCIISM). The Cytoplasmic segment spans residues 132–150 (DRYWAISSPFRYERRMTPR). A helical transmembrane segment spans residues 151-175 (FGCVMIGVAWTLSVLISFIPVQLNW). Topologically, residues 176–195 (HARGRERTDPGDCNASLNRT) are extracellular. N-linked (GlcNAc...) asparagine glycosylation is found at Asn189 and Asn193. A helical transmembrane segment spans residues 196–220 (YAISSSLISFYIPVLIMVGTYTRIF). The Cytoplasmic portion of the chain corresponds to 221 to 266 (RIGRTQIRRISSLERAAPRATRGPALCDEESSLKTSFRRETKVLKT). Residues 267–292 (LSVIMGVFVFCWLPFFVLNCMVPFCR) traverse the membrane as a helical segment. The Extracellular segment spans residues 293-305 (LEPAAAPCVSDTT). The helical transmembrane segment at 306–325 (FSVFVWFGWANSSLNPVIYA) threads the bilayer. The Cytoplasmic segment spans residues 326-386 (FNADFRKAFS…SRGGPYQFAL (61 aa)).

This sequence belongs to the G-protein coupled receptor 1 family.

It is found in the cell membrane. The protein resides in the cell projection. The protein localises to the cilium membrane. In terms of biological role, this is one of the five types (D1 to D5) of receptors for dopamine. The activity of this receptor is mediated by G proteins which activate adenylyl cyclase. This Oreochromis mossambicus (Mozambique tilapia) protein is D(1)-like dopamine receptor.